The primary structure comprises 332 residues: L-lactate dehydrogenase A chain (332 aa).

Ala2 carries the post-translational modification N-acetylalanine. Lys5 carries the N6-acetyllysine; alternate modification. The residue at position 5 (Lys5) is an N6-succinyllysine; alternate. Position 14 is an N6-acetyllysine (Lys14). NAD(+) is bound at residue 29–57; that stretch reads GAVGMACAISILMKDLADELALVDVMEDK. Residue Lys57 is modified to N6-acetyllysine; alternate. Residue Lys57 forms a Glycyl lysine isopeptide (Lys-Gly) (interchain with G-Cter in SUMO2); alternate linkage. Lys81 is subject to N6-acetyllysine. Residue Arg99 coordinates NAD(+). A substrate-binding site is contributed by Arg106. Position 118 is an N6-acetyllysine; alternate (Lys118). At Lys118 the chain carries N6-succinyllysine; alternate. Residue Lys126 is modified to N6-acetyllysine. Asn138 provides a ligand contact to NAD(+). Substrate-binding residues include Asn138 and Arg169. Residue His193 is the Proton acceptor of the active site. An N6-acetyllysine mark is found at Lys224 and Lys232. Tyr239 is subject to Phosphotyrosine. Lys243 is subject to N6-acetyllysine. A substrate-binding site is contributed by Thr248. Thr309 carries the phosphothreonine modification. The residue at position 310 (Ser310) is a Phosphoserine. Lys318 is subject to N6-acetyllysine; alternate. Lys318 is modified (N6-succinyllysine; alternate). Thr322 carries the post-translational modification Phosphothreonine.

Belongs to the LDH/MDH superfamily. LDH family. As to quaternary structure, homotetramer. Interacts with PTEN upstream reading frame protein MP31. ISGylated.

Its subcellular location is the cytoplasm. It carries out the reaction (S)-lactate + NAD(+) = pyruvate + NADH + H(+). The protein operates within fermentation; pyruvate fermentation to lactate; (S)-lactate from pyruvate: step 1/1. Interconverts simultaneously and stereospecifically pyruvate and lactate with concomitant interconversion of NADH and NAD(+). This chain is L-lactate dehydrogenase A chain (LDHA), found in Oryctolagus cuniculus (Rabbit).